The chain runs to 1043 residues: Glutamate receptor ionotropic, NMDA 3B (1043 aa).

The N-terminal stretch at 1–22 (MEFVRALWLGLALALGPGSAGG) is a signal peptide. The Extracellular portion of the chain corresponds to 23–574 (HPQPCGVLAR…PIGAFMWPLH (552 aa)). Residues N69, N344, N451, and N465 are each glycosylated (N-linked (GlcNAc...) asparagine). Cystine bridges form between C439-C475 and C445-C476. Positions 531, 533, and 538 each coordinate glycine. 2 residues coordinate D-serine: S533 and R538. The chain crosses the membrane as a helical span at residues 575–594 (WSTWLGVFAALHLTALFLTV). The Cytoplasmic segment spans residues 595 to 615 (YEWRSPYGLTPRGRNRSTVFS). Positions 616–627 (YSSALNLCYAIL) form an intramembrane region, discontinuously helical. Over 628–641 (FRRTVSSKTPKCPT) the chain is Cytoplasmic. Residues 642-661 (GRLLMNLWAIFCLLVLSSYT) form a helical membrane-spanning segment. The Extracellular segment spans residues 662–832 (ANLAAVMVGD…TLQMSIYHFA (171 aa)). S701 serves as a coordination point for glycine. The D-serine site is built by S701, A702, and D745. D745 is a binding site for glycine. N-linked (GlcNAc...) asparagine glycosylation is present at N786. The chain crosses the membrane as a helical span at residues 833–848 (GLFVLLCLGLGSALLS). Residues 849–1043 (SLGEHAFFRL…PHSGRPGSQE (195 aa)) lie on the Cytoplasmic side of the membrane. Disordered stretches follow at residues 882 to 924 (ALNT…WKRA) and 1012 to 1043 (GDSARHRPRRLLQARAAPAEAPPHSGRPGSQE). An involved in the trafficking and surface expression of NMDARs region spans residues 979–1012 (QPGELQELERRIEVARERLRQALVRRGQLLAQLG). A compositionally biased stretch (low complexity) spans 1024 to 1035 (QARAAPAEAPPH).

Belongs to the glutamate-gated ion channel (TC 1.A.10.1) family. NR3B/GRIN3B subfamily. As to quaternary structure, forms heterotetrameric channels that contain at least two GluN1 subunits and at least a combination of one GluN2 and one GluN3 subunits (in vitro). Forms heterotetrameric channels composed of two GluN1/zeta subunits (GRIN1), and two identical GluN3 subunits (GRIN3A or GRIN3B) (in vitro). Does not form functional homomeric channels.

Its subcellular location is the cell membrane. The protein resides in the postsynaptic cell membrane. The catalysed reaction is Ca(2+)(in) = Ca(2+)(out). It carries out the reaction Na(+)(in) = Na(+)(out). Its function is as follows. Component of a non-conventional N-methyl-D-aspartate (NMDA) receptors (NMDARs) that function as heterotetrameric, ligand-gated cation channels with low calcium permeability and low voltage-dependent block by Mg(2+). Forms glutamatergic receptor complexes with GluN1 and GluN2 subunits which are activated by glycine binding to the GluN1 and GluN3 subunits and L-glutamate binding to GluN2 subunits. Forms excitatory glycinergic receptor complexes with GluN1 alone which are activated by glycine binding to the GluN1 and GluN3 subunits. GluN3B subunit also binds D-serine and, in the absence of glycine, activates glycinergic receptor complexes, but with lower efficacy than glycine. Each GluN3 subunit confers differential attributes to channel properties, including activation, deactivation and desensitization kinetics, pH sensitivity, Ca2(+) permeability, and binding to allosteric modulators. This chain is Glutamate receptor ionotropic, NMDA 3B, found in Homo sapiens (Human).